The sequence spans 571 residues: Proline--tRNA ligase (571 aa).

This sequence belongs to the class-II aminoacyl-tRNA synthetase family. ProS type 1 subfamily. As to quaternary structure, homodimer.

The protein resides in the cytoplasm. The enzyme catalyses tRNA(Pro) + L-proline + ATP = L-prolyl-tRNA(Pro) + AMP + diphosphate. Its function is as follows. Catalyzes the attachment of proline to tRNA(Pro) in a two-step reaction: proline is first activated by ATP to form Pro-AMP and then transferred to the acceptor end of tRNA(Pro). As ProRS can inadvertently accommodate and process non-cognate amino acids such as alanine and cysteine, to avoid such errors it has two additional distinct editing activities against alanine. One activity is designated as 'pretransfer' editing and involves the tRNA(Pro)-independent hydrolysis of activated Ala-AMP. The other activity is designated 'posttransfer' editing and involves deacylation of mischarged Ala-tRNA(Pro). The misacylated Cys-tRNA(Pro) is not edited by ProRS. This is Proline--tRNA ligase from Photobacterium profundum (strain SS9).